The following is a 131-amino-acid chain: Profilin (131 aa).

Belongs to the profilin family. Occurs in many kinds of cells as a complex with monomeric actin in a 1:1 ratio.

Its subcellular location is the cytoplasm. It is found in the cytoskeleton. Binds to actin and affects the structure of the cytoskeleton. At high concentrations, profilin prevents the polymerization of actin, whereas it enhances it at low concentrations. By binding to PIP2, it inhibits the formation of IP3 and DG. This is Profilin (PRO1) from Cynodon dactylon (Bermuda grass).